Here is a 408-residue protein sequence, read N- to C-terminus: Arginine biosynthesis bifunctional protein ArgJ (408 aa).

Substrate is bound by residues threonine 158, lysine 184, threonine 195, glutamate 281, asparagine 403, and threonine 408. Threonine 195 functions as the Nucleophile in the catalytic mechanism.

Belongs to the ArgJ family. In terms of assembly, heterotetramer of two alpha and two beta chains.

Its subcellular location is the cytoplasm. The enzyme catalyses N(2)-acetyl-L-ornithine + L-glutamate = N-acetyl-L-glutamate + L-ornithine. It catalyses the reaction L-glutamate + acetyl-CoA = N-acetyl-L-glutamate + CoA + H(+). It functions in the pathway amino-acid biosynthesis; L-arginine biosynthesis; L-ornithine and N-acetyl-L-glutamate from L-glutamate and N(2)-acetyl-L-ornithine (cyclic): step 1/1. It participates in amino-acid biosynthesis; L-arginine biosynthesis; N(2)-acetyl-L-ornithine from L-glutamate: step 1/4. Functionally, catalyzes two activities which are involved in the cyclic version of arginine biosynthesis: the synthesis of N-acetylglutamate from glutamate and acetyl-CoA as the acetyl donor, and of ornithine by transacetylation between N(2)-acetylornithine and glutamate. In Bacillus cereus (strain ATCC 14579 / DSM 31 / CCUG 7414 / JCM 2152 / NBRC 15305 / NCIMB 9373 / NCTC 2599 / NRRL B-3711), this protein is Arginine biosynthesis bifunctional protein ArgJ.